A 335-amino-acid chain; its full sequence is Methionine aminopeptidase 1D, mitochondrial (335 aa).

A mitochondrion-targeting transit peptide spans 1–19 (MAAPIGVPLLVRGGCQRIL). H161 serves as a coordination point for substrate. A divalent metal cation contacts are provided by D178, D189, and H252. H259 contacts substrate. Residues E284 and E315 each coordinate a divalent metal cation.

Belongs to the peptidase M24A family. Methionine aminopeptidase type 1 subfamily. Co(2+) is required as a cofactor. It depends on Zn(2+) as a cofactor. The cofactor is Mn(2+). Requires Fe(2+) as cofactor.

Its subcellular location is the mitochondrion. The catalysed reaction is Release of N-terminal amino acids, preferentially methionine, from peptides and arylamides.. Removes the N-terminal methionine from nascent proteins. The N-terminal methionine is often cleaved when the second residue in the primary sequence is small and uncharged (Met-Ala-, Cys, Gly, Pro, Ser, Thr, or Val). Requires deformylation of the N(alpha)-formylated initiator methionine before it can be hydrolyzed. The protein is Methionine aminopeptidase 1D, mitochondrial (Metap1d) of Mus musculus (Mouse).